A 363-amino-acid chain; its full sequence is Putative replication factor C small subunit L510 (363 aa).

Gly-47–Thr-54 contacts ATP.

It belongs to the activator 1 small subunits family. RfcS subfamily.

Its function is as follows. Part of the RFC clamp loader complex which loads the PCNA sliding clamp onto DNA. The sequence is that of Putative replication factor C small subunit L510 from Acanthamoeba polyphaga mimivirus (APMV).